Here is a 515-residue protein sequence, read N- to C-terminus: Protein disulfide-isomerase (515 aa).

The signal sequence occupies residues 1 to 20; it reads MRTFAPWILSLLGASAVASA. Thioredoxin domains follow at residues 21–136 and 343–470; these read ADAT…QSLP and VLDD…ENGK. Catalysis depends on nucleophile residues Cys58, Cys61, Cys393, and Cys396. Disulfide bonds link Cys58-Cys61 and Cys393-Cys396. 2 stretches are compositionally biased toward basic and acidic residues: residues 472 to 496 and 506 to 515; these read KVDA…RAAS and SDDKSEHDEL. Positions 472-515 are disordered; sequence KVDALEVDPKKEQESGDATETRAASDETETPAATSDDKSEHDEL. The short motif at 512-515 is the Prevents secretion from ER element; that stretch reads HDEL.

It belongs to the protein disulfide isomerase family.

It localises to the endoplasmic reticulum lumen. It carries out the reaction Catalyzes the rearrangement of -S-S- bonds in proteins.. Functionally, participates in the folding of proteins containing disulfide bonds, may be involved in glycosylation, prolyl hydroxylation and triglyceride transfer. The protein is Protein disulfide-isomerase (pdiA) of Aspergillus oryzae (strain ATCC 42149 / RIB 40) (Yellow koji mold).